The chain runs to 243 residues: 2-C-methyl-D-erythritol 4-phosphate cytidylyltransferase (243 aa).

Belongs to the IspD/TarI cytidylyltransferase family. IspD subfamily.

It carries out the reaction 2-C-methyl-D-erythritol 4-phosphate + CTP + H(+) = 4-CDP-2-C-methyl-D-erythritol + diphosphate. It functions in the pathway isoprenoid biosynthesis; isopentenyl diphosphate biosynthesis via DXP pathway; isopentenyl diphosphate from 1-deoxy-D-xylulose 5-phosphate: step 2/6. Functionally, catalyzes the formation of 4-diphosphocytidyl-2-C-methyl-D-erythritol from CTP and 2-C-methyl-D-erythritol 4-phosphate (MEP). In Rhodopirellula baltica (strain DSM 10527 / NCIMB 13988 / SH1), this protein is 2-C-methyl-D-erythritol 4-phosphate cytidylyltransferase.